The primary structure comprises 194 residues: Large ribosomal subunit protein bL25 (194 aa).

This sequence belongs to the bacterial ribosomal protein bL25 family. CTC subfamily. Part of the 50S ribosomal subunit; part of the 5S rRNA/L5/L18/L25 subcomplex. Contacts the 5S rRNA. Binds to the 5S rRNA independently of L5 and L18.

Its function is as follows. This is one of the proteins that binds to the 5S RNA in the ribosome where it forms part of the central protuberance. This is Large ribosomal subunit protein bL25 from Parabacteroides distasonis (strain ATCC 8503 / DSM 20701 / CIP 104284 / JCM 5825 / NCTC 11152).